A 240-amino-acid polypeptide reads, in one-letter code: Probable transcriptional regulatory protein SO_3401 (240 aa).

It belongs to the TACO1 family.

The protein localises to the cytoplasm. In Shewanella oneidensis (strain ATCC 700550 / JCM 31522 / CIP 106686 / LMG 19005 / NCIMB 14063 / MR-1), this protein is Probable transcriptional regulatory protein SO_3401.